The primary structure comprises 183 residues: Adenine phosphoribosyltransferase (183 aa).

It belongs to the purine/pyrimidine phosphoribosyltransferase family. Homodimer.

It localises to the cytoplasm. It catalyses the reaction AMP + diphosphate = 5-phospho-alpha-D-ribose 1-diphosphate + adenine. It functions in the pathway purine metabolism; AMP biosynthesis via salvage pathway; AMP from adenine: step 1/1. Its function is as follows. Catalyzes a salvage reaction resulting in the formation of AMP, that is energically less costly than de novo synthesis. The polypeptide is Adenine phosphoribosyltransferase (Photorhabdus laumondii subsp. laumondii (strain DSM 15139 / CIP 105565 / TT01) (Photorhabdus luminescens subsp. laumondii)).